The following is an 865-amino-acid chain: Serine/threonine-protein kinase greatwall (865 aa).

Met1 is subject to N-acetylmethionine. Residues 34–821 form the Protein kinase domain; it reads FTIVKPISRG…MRELKQHPLF (788 aa). ATP-binding positions include 40–48 and Lys61; that span reads ISRGAFGKV. The active-site Proton acceptor is Asp155. Thr206 and Thr221 each carry phosphothreonine. Residues Ser362 and Ser442 each carry the phosphoserine modification. A Phosphothreonine modification is found at Thr508. Residues Ser545, Ser619, Ser644, and Ser655 each carry the phosphoserine modification. Thr708 is subject to Phosphothreonine. Ser711 carries the post-translational modification Phosphoserine. Thr727 carries the phosphothreonine; by CDK1 modification. Positions 822-865 constitute an AGC-kinase C-terminal domain; sequence SEVDWENLQHQTMPFVPQPDDETDTSYFEARNNAQHLTISGFSL. Phosphoserine occurs at positions 861 and 864.

Belongs to the protein kinase superfamily. AGC Ser/Thr protein kinase family. Post-translationally, phosphorylation at Thr-727 by CDK1 during M phase activates its kinase activity. Maximum phosphorylation occurs in prometaphase.

Its subcellular location is the cytoplasm. It is found in the cytoskeleton. The protein localises to the microtubule organizing center. It localises to the centrosome. The protein resides in the nucleus. The catalysed reaction is L-seryl-[protein] + ATP = O-phospho-L-seryl-[protein] + ADP + H(+). It catalyses the reaction L-threonyl-[protein] + ATP = O-phospho-L-threonyl-[protein] + ADP + H(+). Its function is as follows. Serine/threonine kinase that plays a key role in M phase by acting as a regulator of mitosis entry and maintenance. Acts by promoting the inactivation of protein phosphatase 2A (PP2A) during M phase: does not directly inhibit PP2A but acts by mediating phosphorylation and subsequent activation of ARPP19 and ENSA at 'Ser-62' and 'Ser-67', respectively. ARPP19 and ENSA are phosphatase inhibitors that specifically inhibit the PPP2R2D (PR55-delta) subunit of PP2A. Inactivation of PP2A during M phase is essential to keep cyclin-B1-CDK1 activity high. Following DNA damage, it is also involved in checkpoint recovery by being inhibited. The sequence is that of Serine/threonine-protein kinase greatwall (Mastl) from Mus musculus (Mouse).